Here is a 261-residue protein sequence, read N- to C-terminus: uncharacterized protein (261 aa).

An N-acetyltransferase domain is found at 135–261 (LVLKRIDEDI…VTEYTIYYSG (127 aa)).

The protein belongs to the acetyltransferase family.

This is an uncharacterized protein from Bacillus subtilis (strain 168).